The following is an 804-amino-acid chain: Enhancer of polycomb homolog 2 (804 aa).

Disordered stretches follow at residues 372-398, 484-507, 602-623, and 642-669; these read QSSD…PDGS, GFSS…SDRH, QQSQ…KSDC, and NSPT…VQPS. The span at 602–611 shows a compositional bias: low complexity; the sequence is QQSQQSLQQS. Residues 654 to 669 show a composition bias toward polar residues; it reads DQNAGHSNLNGVVQPS.

It belongs to the enhancer of polycomb family.

The protein resides in the nucleus. In terms of biological role, may play a role in transcription or DNA repair. This chain is Enhancer of polycomb homolog 2 (epc2), found in Xenopus tropicalis (Western clawed frog).